The sequence spans 189 residues: Large ribosomal subunit protein uL5 (189 aa).

The protein belongs to the universal ribosomal protein uL5 family. As to quaternary structure, part of the 50S ribosomal subunit; part of the 5S rRNA/L5/L18/L25 subcomplex. Contacts the 5S rRNA and the P site tRNA. Forms a bridge to the 30S subunit in the 70S ribosome.

Functionally, this is one of the proteins that bind and probably mediate the attachment of the 5S RNA into the large ribosomal subunit, where it forms part of the central protuberance. In the 70S ribosome it contacts protein S13 of the 30S subunit (bridge B1b), connecting the 2 subunits; this bridge is implicated in subunit movement. Contacts the P site tRNA; the 5S rRNA and some of its associated proteins might help stabilize positioning of ribosome-bound tRNAs. This Kineococcus radiotolerans (strain ATCC BAA-149 / DSM 14245 / SRS30216) protein is Large ribosomal subunit protein uL5.